The following is a 48-amino-acid chain: M-oxotoxin-Ot1b (48 aa).

It localises to the secreted. The protein resides in the target cell membrane. In terms of biological role, disrupts cell membranes, particularly those rich in phosphocholine, through formation of pores. Has antimicrobial activity, hemolytic activity and insecticidal activity. The protein is M-oxotoxin-Ot1b of Oxyopes takobius (Lynx spider).